The sequence spans 356 residues: Retinoic acid-induced protein 3 (356 aa).

Residues methionine 1 to threonine 35 lie on the Extracellular side of the membrane. A helical transmembrane segment spans residues leucine 36–cysteine 56. Over lysine 57 to proline 68 the chain is Cytoplasmic. A helical membrane pass occupies residues alanine 69–isoleucine 89. The Extracellular portion of the chain corresponds to lysine 90 to phenylalanine 101. A helical membrane pass occupies residues leucine 102 to isoleucine 122. Over lysine 123 to leucine 131 the chain is Cytoplasmic. The helical transmembrane segment at serine 132 to isoleucine 152 threads the bilayer. Topologically, residues glutamate 153–aspartate 178 are extracellular. Residue asparagine 160 is glycosylated (N-linked (GlcNAc...) asparagine). A helical transmembrane segment spans residues phenylalanine 179–leucine 199. The Cytoplasmic portion of the chain corresponds to valine 200–histidine 214. Residues isoleucine 215 to isoleucine 235 traverse the membrane as a helical segment. Residues proline 236–aspartate 244 lie on the Extracellular side of the membrane. The helical transmembrane segment at threonine 245–proline 265 threads the bilayer. The Cytoplasmic portion of the chain corresponds to glutamate 266–serine 356. Position 303 is a phosphoserine (serine 303). A phosphotyrosine mark is found at tyrosine 318 and tyrosine 321. A disordered region spans residues isoleucine 336 to serine 356. Serine 344 is modified (phosphoserine). 2 positions are modified to phosphotyrosine: tyrosine 346 and tyrosine 349.

It belongs to the G-protein coupled receptor 3 family. Interacts (via its transmembrane domain) with EGFR. In terms of processing, phosphorylated in two conserved double-tyrosine motifs, Tyr 318/Tyr-321 and Tyr-346/Tyr-349 by EGFR. Tyr-318 and Tyr-321 are the preferred residues responsible for EGFR-mediated GPRC5A phosphorylation. As to expression, expressed predominantly in normal fetal and adult lung. Almost undetectable or expressed at very low levels in other tissues.

Its subcellular location is the cell membrane. In terms of biological role, orphan receptor. Could be involved in modulating differentiation and maintaining homeostasis of epithelial cells. This retinoic acid-inducible GPCR provides evidence for a possible interaction between retinoid and G-protein signaling pathways. Functions as a negative modulator of EGFR signaling. Acts as a lung tumor suppressor. The sequence is that of Retinoic acid-induced protein 3 (Gprc5a) from Mus musculus (Mouse).